A 454-amino-acid chain; its full sequence is Chromosomal replication initiator protein DnaA (454 aa).

The domain I, interacts with DnaA modulators stretch occupies residues 1–80 (MNLSNLWQSC…NPELRISLKE (80 aa)). Residues 80-117 (EGVKPAPKIVESTPNTSLRSESAVDFQAESSASVKFES) are domain II. The tract at residues 118–335 (HLNTKHLFDN…GALNRVKAMQ (218 aa)) is domain III, AAA+ region. The ATP site is built by Gly163, Gly165, Lys166, and Thr167. The domain IV, binds dsDNA stretch occupies residues 336–454 (DFKGGDIDID…WANLIRTLSA (119 aa)).

It belongs to the DnaA family. In terms of assembly, oligomerizes as a right-handed, spiral filament on DNA at oriC.

Its subcellular location is the cytoplasm. Its function is as follows. Plays an essential role in the initiation and regulation of chromosomal replication. ATP-DnaA binds to the origin of replication (oriC) to initiate formation of the DNA replication initiation complex once per cell cycle. Binds the DnaA box (a 9 base pair repeat at the origin) and separates the double-stranded (ds)DNA. Forms a right-handed helical filament on oriC DNA; dsDNA binds to the exterior of the filament while single-stranded (ss)DNA is stabiized in the filament's interior. The ATP-DnaA-oriC complex binds and stabilizes one strand of the AT-rich DNA unwinding element (DUE), permitting loading of DNA polymerase. After initiation quickly degrades to an ADP-DnaA complex that is not apt for DNA replication. Binds acidic phospholipids. The sequence is that of Chromosomal replication initiator protein DnaA from Haemophilus influenzae (strain ATCC 51907 / DSM 11121 / KW20 / Rd).